Reading from the N-terminus, the 200-residue chain is Blue fluorescence protein (200 aa).

Lumazine-binding repeat units lie at residues 1–111 and 112–200; these read MFKG…TGGR and SLSG…AGNW.

As to quaternary structure, monomer.

The protein resides in the cytoplasm. Blue fluorescence protein (BFP) that can bind 6,7-dimethyl-8-ribityllumazine, riboflavin, and 6-methyl-7-oxo-8-ribityllumazine as a bound fluorophore. Has no riboflavin-synthase activity. This Aliivibrio fischeri (Vibrio fischeri) protein is Blue fluorescence protein.